We begin with the raw amino-acid sequence, 241 residues long: Probable xyloglucan-specific endo-beta-1,4-glucanase A (241 aa).

An N-terminal signal peptide occupies residues 1-18 (MKFNLALALSLTVATAEA).

This sequence belongs to the glycosyl hydrolase 12 (cellulase H) family.

It is found in the secreted. It catalyses the reaction xyloglucan + H2O = xyloglucan oligosaccharides.. Its function is as follows. Catalyzes endohydrolysis of 1,4-beta-D-glucosidic linkages in xyloglucan with retention of the beta-configuration of the glycosyl residues. Specific for xyloglucan and does not hydrolyze other cell wall components. In Aspergillus clavatus (strain ATCC 1007 / CBS 513.65 / DSM 816 / NCTC 3887 / NRRL 1 / QM 1276 / 107), this protein is Probable xyloglucan-specific endo-beta-1,4-glucanase A (xgeA).